The sequence spans 338 residues: uncharacterized protein (338 aa).

The first 29 residues, M1–A29, serve as a signal peptide directing secretion.

The protein belongs to the aerolysin family.

This is an uncharacterized protein from Staphylococcus aureus (strain Mu50 / ATCC 700699).